Consider the following 225-residue polypeptide: Flagellar transcriptional regulator FlhC (225 aa).

Residues cysteine 149, cysteine 152, cysteine 169, and cysteine 172 each coordinate Zn(2+).

The protein belongs to the FlhC family. As to quaternary structure, heterohexamer composed of two FlhC and four FlhD subunits. Each FlhC binds a FlhD dimer, forming a heterotrimer, and a hexamer assembles by dimerization of two heterotrimers. The cofactor is Zn(2+).

The protein resides in the cytoplasm. Functionally, functions in complex with FlhD as a master transcriptional regulator that regulates transcription of several flagellar and non-flagellar operons by binding to their promoter region. Activates expression of class 2 flagellar genes, including fliA, which is a flagellum-specific sigma factor that turns on the class 3 genes. Also regulates genes whose products function in a variety of physiological pathways. In Burkholderia lata (strain ATCC 17760 / DSM 23089 / LMG 22485 / NCIMB 9086 / R18194 / 383), this protein is Flagellar transcriptional regulator FlhC.